A 147-amino-acid polypeptide reads, in one-letter code: 3-dehydroquinate dehydratase (147 aa).

Catalysis depends on Tyr-23, which acts as the Proton acceptor. Residues Asn-74, His-80, and Asp-87 each coordinate substrate. His-100 serves as the catalytic Proton donor. Residues 101-102 (LS) and Arg-111 each bind substrate.

The protein belongs to the type-II 3-dehydroquinase family. In terms of assembly, homododecamer.

It catalyses the reaction 3-dehydroquinate = 3-dehydroshikimate + H2O. The protein operates within metabolic intermediate biosynthesis; chorismate biosynthesis; chorismate from D-erythrose 4-phosphate and phosphoenolpyruvate: step 3/7. Functionally, catalyzes a trans-dehydration via an enolate intermediate. This Glaesserella parasuis serovar 5 (strain SH0165) (Haemophilus parasuis) protein is 3-dehydroquinate dehydratase.